The sequence spans 436 residues: Trigger factor (436 aa).

In terms of domain architecture, PPIase FKBP-type spans 164-249; the sequence is GDTVVIDFEG…IHEVKTKELP (86 aa).

It belongs to the FKBP-type PPIase family. Tig subfamily.

The protein localises to the cytoplasm. The catalysed reaction is [protein]-peptidylproline (omega=180) = [protein]-peptidylproline (omega=0). Functionally, involved in protein export. Acts as a chaperone by maintaining the newly synthesized protein in an open conformation. Functions as a peptidyl-prolyl cis-trans isomerase. This Ligilactobacillus salivarius (strain UCC118) (Lactobacillus salivarius) protein is Trigger factor.